Reading from the N-terminus, the 314-residue chain is Versiconal hemiacetal acetate esterase (314 aa).

Positions 85-87 (HGG) match the Involved in the stabilization of the negatively charged intermediate by the formation of the oxyanion hole motif. Catalysis depends on residues Ser154, Asp255, and His285.

It belongs to the 'GDXG' lipolytic enzyme family.

It catalyses the reaction (2S,3S)-versiconal hemiacetal acetate + H2O = (2S-3S)-versiconal hemiacetal + acetate + H(+). The enzyme catalyses (3S)-versiconol acetate + H2O = (S)-versiconol + acetate + H(+). It participates in mycotoxin biosynthesis; aflatoxin biosynthesis. Its function is as follows. Versiconal hemiacetal acetate esterase; part of the gene cluster that mediates the biosynthesis of aflatoxins, a group of polyketide-derived furanocoumarins, and part of the most toxic and carcinogenic compounds among the known mycotoxins. The four major aflatoxins produced by A.parasiticus are aflatoxin B1 (AFB1), aflatoxin B2 (AFB2), aflatoxin G1 (AFG1) and aflatoxin G2 (AFG2). Within the aflatoxin pathway, the versiconal hemiacetal acetate esterase aflJ converts versiconal hemiacetal acetate (VHA) into versiconal (VAL). The biosynthesis of aflatoxins begins with the norsolorinic acid synthase aflC that combines a hexanoyl starter unit produced by the fatty acid synthase aflA/aflB and 7 malonyl-CoA extender units to synthesize the precursor NOR. The second step is the conversion of NOR to averantin and requires the norsolorinic acid ketoreductase aflD, which catalyzes the dehydration of norsolorinic acid to form (1'S)-averantin. The norsolorinic acid reductases aflE and aflF may also play a role in the conversion of NOR to AVN. The cytochrome P450 monooxygenase aflG then catalyzes the hydroxylation of AVN to 5'hydroxyaverantin (HAVN). The next step is performed by the 5'-hydroxyaverantin dehydrogenase aflH that transforms HAVN to 5'-oxoaverantin (OAVN) which is further converted to averufin (AVF) by aflK that plays a dual role in the pathway, as a 5'-oxoaverantin cyclase that mediates conversion of 5'-oxoaverantin, as well as a versicolorin B synthase in a later step in the pathway. The averufin oxidase aflI catalyzes the conversion of AVF to versiconal hemiacetal acetate (VHA). VHA is then the substrate for the versiconal hemiacetal acetate esterase aflJ to yield versiconal (VAL). Versicolorin B synthase aflK then converts VAL to versicolorin B (VERB) by closing the bisfuran ring of aflatoxin which is required for DNA-binding, thus giving to aflatoxin its activity as a mutagen. Then, the activity of the versicolorin B desaturase aflL leads to versicolorin A (VERA). A branch point starts from VERB since it can also be converted to dihydrodemethylsterigmatocystin (DMDHST), probably also by aflL, VERA being a precursor for aflatoxins B1 and G1, and DMDHST for aflatoxins B2 and G2. Next, the versicolorin reductase aflM and the cytochrome P450 monooxygenase aflN are involved in conversion of VERA to demethylsterigmatocystin (DMST). AflX and aflY seem also involved in this step, through probable aflX-mediated epoxide ring-opening step following versicolorin A oxidation and aflY-mediated Baeyer-Villiger oxidation required for the formation of the xanthone ring. The methyltransferase aflO then leads to the modification of DMST to sterigmatocystin (ST), and of DMDHST to dihydrosterigmatocystin (DHST). Both ST and DHST are then substrates of the O-methyltransferase aflP to yield O-methylsterigmatocystin (OMST) and dihydro-O-methylsterigmatocystin (DHOMST), respectively. Finally OMST is converted to aflatoxins B1 and G1, and DHOMST to aflatoxins B2 and G2, via the action of several enzymes including O-methylsterigmatocystin oxidoreductase aflQ, the cytochrome P450 monooxygenase aflU, but also the NADH-dependent flavin oxidoreductase nadA which is specifically required for the synthesis of AFG1. This chain is Versiconal hemiacetal acetate esterase, found in Aspergillus parasiticus (strain ATCC 56775 / NRRL 5862 / SRRC 143 / SU-1).